A 949-amino-acid polypeptide reads, in one-letter code: Copper-transporting ATPase PAA1, chloroplastic (949 aa).

The N-terminal 103 residues, 1–103, are a transit peptide targeting the chloroplast; that stretch reads MESTLSAFST…SSSPSFRSIS (103 aa). A compositionally biased stretch (gly residues) spans 113–126; it reads YNGGSGGGGGGGSE. Residues 113–142 are disordered; that stretch reads YNGGSGGGGGGGSESGDSKSKLGANASDGV. One can recognise an HMA domain in the interval 148-222; it reads DIIILDVGGM…HLTNCGFQST (75 aa). Cu(+)-binding residues include cysteine 159 and cysteine 162. 6 helical membrane-spanning segments follow: residues 253 to 274, 287 to 306, 314 to 334, 349 to 369, 502 to 524, and 543 to 560; these read LAVS…FLGV, FHVS…LVLD, GSPN…SVSS, EEPV…QRAK, VAGR…WNLF, and LQLS…ALGL. The active-site 4-aspartylphosphate intermediate is the aspartate 598. An ATP-binding site is contributed by 807–814; the sequence is GDGINDAA. Mg(2+)-binding residues include aspartate 808 and aspartate 812. 2 helical membrane passes run 863–882 and 895–913; these read KQNL…IAAG and SMAG…TNSL. The segment at 925-949 is disordered; sequence DKNVKPEPKEGTKQPHENTRWKQSS.

The protein belongs to the cation transport ATPase (P-type) (TC 3.A.3) family. Type IB subfamily. As to expression, expressed in the shoots and roots.

The protein localises to the plastid. The protein resides in the chloroplast membrane. The catalysed reaction is Cu(+)(in) + ATP + H2O = Cu(+)(out) + ADP + phosphate + H(+). Mediates copper transfer across the plastid envelope. Required for the delivery of copper into the plastid stroma, which is essential for the function of copper proteins. Seems to be selective for monovalent copper Cu(+) transport. Also plays a role in glucose signaling-mediated cell proliferation of root meristem in non-green tissues. The sequence is that of Copper-transporting ATPase PAA1, chloroplastic (PAA1) from Arabidopsis thaliana (Mouse-ear cress).